The primary structure comprises 461 residues: tRNA modification GTPase MnmE (461 aa).

(6S)-5-formyl-5,6,7,8-tetrahydrofolate contacts are provided by arginine 22, glutamate 87, and arginine 126. The region spanning 223-382 (GLSTVILGRP…LEEAIAALFF (160 aa)) is the TrmE-type G domain. Asparagine 233 contributes to the K(+) binding site. Residues 233-238 (NVGKSS), 252-258 (TDIAGTT), and 277-280 (DTAG) each bind GTP. Mg(2+) is bound at residue serine 237. K(+) contacts are provided by threonine 252, isoleucine 254, and threonine 257. Residue threonine 258 participates in Mg(2+) binding. Lysine 461 serves as a coordination point for (6S)-5-formyl-5,6,7,8-tetrahydrofolate.

It belongs to the TRAFAC class TrmE-Era-EngA-EngB-Septin-like GTPase superfamily. TrmE GTPase family. In terms of assembly, homodimer. Heterotetramer of two MnmE and two MnmG subunits. K(+) serves as cofactor.

It is found in the cytoplasm. Exhibits a very high intrinsic GTPase hydrolysis rate. Involved in the addition of a carboxymethylaminomethyl (cmnm) group at the wobble position (U34) of certain tRNAs, forming tRNA-cmnm(5)s(2)U34. This Lysinibacillus sphaericus (strain C3-41) protein is tRNA modification GTPase MnmE.